The sequence spans 431 residues: Enolase (431 aa).

Gln167 contributes to the (2R)-2-phosphoglycerate binding site. Glu209 acts as the Proton donor in catalysis. Mg(2+)-binding residues include Asp246, Glu290, and Asp317. Residues Lys342, Arg371, Ser372, and Lys393 each coordinate (2R)-2-phosphoglycerate. The Proton acceptor role is filled by Lys342.

The protein belongs to the enolase family. As to quaternary structure, component of the RNA degradosome, a multiprotein complex involved in RNA processing and mRNA degradation. Mg(2+) serves as cofactor.

The protein localises to the cytoplasm. It localises to the secreted. Its subcellular location is the cell surface. It carries out the reaction (2R)-2-phosphoglycerate = phosphoenolpyruvate + H2O. The protein operates within carbohydrate degradation; glycolysis; pyruvate from D-glyceraldehyde 3-phosphate: step 4/5. In terms of biological role, catalyzes the reversible conversion of 2-phosphoglycerate (2-PG) into phosphoenolpyruvate (PEP). It is essential for the degradation of carbohydrates via glycolysis. The sequence is that of Enolase from Serratia proteamaculans (strain 568).